Here is a 36-residue protein sequence, read N- to C-terminus: Potassium channel toxin alpha-KTx 16.5 (36 aa).

Intrachain disulfides connect Cys-7-Cys-28, Cys-13-Cys-33, and Cys-17-Cys-35. An interaction with Ca(2+)-activated K(+) channels region spans residues 26–33 (GKCQNKQC).

Belongs to the short scorpion toxin superfamily. Potassium channel inhibitor family. Alpha-KTx 16 subfamily. Expressed by the venom gland.

It is found in the secreted. In terms of biological role, augments responses to direct muscle stimulation probably by blocking calcium-activated potassium channels. This Leiurus hebraeus (Hebrew deathstalker scorpion) protein is Potassium channel toxin alpha-KTx 16.5.